The sequence spans 251 residues: 5'-nucleotidase SurE 1 (251 aa).

Positions 8, 9, 39, and 95 each coordinate a divalent metal cation.

This sequence belongs to the SurE nucleotidase family. Requires a divalent metal cation as cofactor.

The protein localises to the cytoplasm. The enzyme catalyses a ribonucleoside 5'-phosphate + H2O = a ribonucleoside + phosphate. Its function is as follows. Nucleotidase that shows phosphatase activity on nucleoside 5'-monophosphates. The protein is 5'-nucleotidase SurE 1 of Thermus thermophilus (strain ATCC BAA-163 / DSM 7039 / HB27).